The chain runs to 484 residues: Putative sodium/proton-dependent alanine carrier protein YrbD (484 aa).

11 consecutive transmembrane segments (helical) span residues 11–31 (VLWSTPVIYILLGIGFAFSIM), 66–88 (ALSGRVGTGNIAGVATAIAFGGP), 92–114 (FWMWAIAFIGAASAFVESTLAQI), 139–159 (WFAVLFAAAALIAMAFLMPGV), 172–192 (FGISPFVTGCGLVLLLGFIIF), 205–225 (IVPFMAIGYILLSLIIIVMNV), 238–258 (SAFALDSAFGGLIGMAISWGV), 292–312 (AFSVYIDTLFVCSATAFMILF), 350–370 (GFGAGFVAIALFFFAFTTIMA), 390–410 (WAMLGLKLIILAATFYGTVKT), and 416–436 (ALGDAGLGIMVWLNVIAIVLL).

This sequence belongs to the alanine or glycine:cation symporter (AGCS) (TC 2.A.25) family.

The protein resides in the cell membrane. This Bacillus subtilis (strain 168) protein is Putative sodium/proton-dependent alanine carrier protein YrbD (yrbD).